The following is a 6713-amino-acid chain: Extracellular matrix-binding protein EbhA (6713 aa).

FIVAR domains follow at residues 1–58 (MGNL…VEQA), 126–184 (AMGQ…VTAA), 252–310 (AMKG…ITQA), 378–436 (QMGN…VEAA), 504–562 (AMAN…VENA), 630–688 (AMGT…INQI), 756–814 (AMGQ…VDRA), 882–940 (AMNS…VDNA), 1008–1066 (AMGA…INDM), 1134–1192 (AMTA…VNSA), 1260–1318 (AMKG…ITQA), 1386–1444 (AMHS…VEQA), 1512–1570 (AMGQ…VERA), 1638–1696 (AMTA…VTNA), 1764–1822 (AMKG…INQA), 1890–1948 (AMTN…VETA), 2142–2200 (AMNQ…INQK), 2268–2325 (AMGN…VQAA), 2393–2451 (AMGQ…VEAA), 2519–2577 (AMQR…VEQA), 2645–2703 (AMDQ…VTAA), 2771–2829 (AMNQ…VTQA), 2897–2955 (AMER…VEAA), 3023–3081 (AMGN…VEAA), 3149–3207 (AMDK…INQA), 3275–3333 (AMGN…VEQA), 3401–3459 (AMTQ…ITAA), 3527–3585 (AMTQ…IQQA), 3653–3711 (AMTN…VEQA), 3779–3837 (AMTQ…VAQA), 3905–3963 (AMGT…VTKA), 4031–4089 (AMGN…ITRA), 4157–4218 (AMDQ…ITNE), 4283–4341 (AMEL…VNGA), 4409–4467 (AMGN…VEQA), 4535–4592 (AMHG…INQV), 4660–4718 (LMDA…VSSA), 4786–4844 (AMKA…IDQA), 4912–4970 (AMEA…VEQL), 5038–5096 (AMQA…VEQL), 5164–5222 (AMET…VEQA), 5290–5344 (SMDQ…VDQA), 5412–5471 (AMDQ…VIKL), and 5666–5722 (AMET…INGA). A helical transmembrane segment spans residues 6518–6540 (VIKNAIGVVGISGLLASFWFFIA). Residues 6616-6713 (RRKEDEEDVE…KKKKSKKNKK (98 aa)) are disordered. 2 stretches are compositionally biased toward basic and acidic residues: residues 6631 to 6641 (TDEKVLKDNEH) and 6680 to 6690 (QKDNQSKDKKS). Residues 6695–6713 (TSKKVAAKKKKKKSKKNKK) are compositionally biased toward basic residues.

It is found in the cell membrane. This chain is Extracellular matrix-binding protein EbhA (ebhA), found in Staphylococcus aureus (strain Mu3 / ATCC 700698).